The chain runs to 1603 residues: Vitellogenin-4 (1603 aa).

The first 15 residues, methionine 1 to alanine 15, serve as a signal peptide directing secretion. The 662-residue stretch at phenylalanine 24–valine 685 folds into the Vitellogenin domain. The N-linked (GlcNAc...) asparagine glycan is linked to asparagine 1266. In terms of domain architecture, VWFD spans alanine 1306 to glutamate 1475. Disulfide bonds link cysteine 1308–cysteine 1438 and cysteine 1330–cysteine 1474.

As to expression, expressed in the intestine of adult hermaphrodites.

It localises to the secreted. Functionally, precursor of the egg-yolk proteins that are sources of nutrients during embryonic development. Together with other vitellogenins, may play a role in modulating life-span, acting via induction of autophagy and lysosomal lipolysis. In Caenorhabditis elegans, this protein is Vitellogenin-4 (vit-4).